The sequence spans 121 residues: Small ribosomal subunit protein uS13 (121 aa).

Residues 91 to 121 form a disordered region; the sequence is HRKGLPLRGQRTRTNARTRKGPRKAGVALKK.

It belongs to the universal ribosomal protein uS13 family. Part of the 30S ribosomal subunit. Forms a loose heterodimer with protein S19. Forms two bridges to the 50S subunit in the 70S ribosome.

In terms of biological role, located at the top of the head of the 30S subunit, it contacts several helices of the 16S rRNA. In the 70S ribosome it contacts the 23S rRNA (bridge B1a) and protein L5 of the 50S subunit (bridge B1b), connecting the 2 subunits; these bridges are implicated in subunit movement. Contacts the tRNAs in the A and P-sites. The sequence is that of Small ribosomal subunit protein uS13 from Cupriavidus pinatubonensis (strain JMP 134 / LMG 1197) (Cupriavidus necator (strain JMP 134)).